Consider the following 1333-residue polypeptide: NPC1-like intracellular cholesterol transporter 1 (1333 aa).

The N-terminal stretch at 1–20 is a signal peptide; sequence MAAAWQGWLLWALLLNSAQG. The Extracellular portion of the chain corresponds to 21–284; that stretch reads ELYTPTHKAG…SFYMGRMPGW (264 aa). 9 disulfides stabilise this stretch: cysteine 32/cysteine 90, cysteine 38/cysteine 56, cysteine 77/cysteine 125, cysteine 91/cysteine 129, cysteine 113/cysteine 254, cysteine 116/cysteine 172, cysteine 189/cysteine 197, cysteine 243/cysteine 259, and cysteine 256/cysteine 263. A helical membrane pass occupies residues 285–305; sequence LALIIIFTAVFVLLSVVLVYL. Topologically, residues 306 to 352 are cytoplasmic; it reads RVASNRNKNKTAGSQEAPNLPRKRRFSPHTVLGRFFESWGTRVASWP. The chain crosses the membrane as a helical span at residues 353-373; that stretch reads LTVLALSFIVVIALSVGLTFI. The Extracellular portion of the chain corresponds to 374–632; that stretch reads ELTTDPVELW…DEINRTTIQD (259 aa). 2 disulfide bridges follow: cysteine 471-cysteine 485 and cysteine 525-cysteine 542. Positions 632-797 constitute an SSD domain; sequence DLPVFAISYL…MTAFVALLSL (166 aa). Residues 633 to 653 form a helical membrane-spanning segment; the sequence is LPVFAISYLIVFLYISLALGS. The Cytoplasmic segment spans residues 654-665; sequence YSRWSRVAVDSK. A helical transmembrane segment spans residues 666–686; sequence ATLGLGGVAVVLGAVVAAMGF. Residues 687–696 are Extracellular-facing; sequence YSYLGVPSSL. Residues 697-717 traverse the membrane as a helical segment; it reads VIIQVVPFLVLAVGADNIFIF. Residues 718-742 are Cytoplasmic-facing; that stretch reads VLEYQRLPRMPGEQREAHIGRTLGS. The chain crosses the membrane as a helical span at residues 743-763; the sequence is VAPSMLLCSLSEAICFFLGAL. The Extracellular segment spans residues 764 to 776; it reads TSMPAVRTFALTS. A helical membrane pass occupies residues 777-797; that stretch reads GLAIIFDFLLQMTAFVALLSL. The Cytoplasmic segment spans residues 798–846; that stretch reads DSKRQEASRPDVVCCFSSRNLPPPKQKEGLLLCFFRKIYTPFLLHRFIR. A helical transmembrane segment spans residues 847 to 867; sequence PVVLLLFLVLFGANLYLMCNI. Over 868-1113 the chain is Extracellular; it reads SVGLDQDLAL…QQYLTVLPEG (246 aa). Disulfide bonds link cysteine 920–cysteine 925, cysteine 967–cysteine 1025, and cysteine 981–cysteine 990. Residues 1114–1134 traverse the membrane as a helical segment; sequence IFTLALCFVPTFVVCYLLLGL. Topologically, residues 1135 to 1142 are cytoplasmic; sequence DIRSGILN. A helical transmembrane segment spans residues 1143–1163; that stretch reads LLSIIMILVDTIGLMAVWGIS. The Extracellular portion of the chain corresponds to 1164-1165; it reads YN. The chain crosses the membrane as a helical span at residues 1166 to 1186; the sequence is AVSLINLVTAVGMSVEFVSHI. At 1187–1206 the chain is on the cytoplasmic side; that stretch reads TRSFAVSTKPTRLERAKDAT. Residues 1207–1227 traverse the membrane as a helical segment; it reads IFMGSAVFAGVAMTNFPGILI. Residues 1228–1242 are Extracellular-facing; it reads LGFAQAQLIQIFFFR. The chain crosses the membrane as a helical span at residues 1243-1263; sequence LNLLITLLGLLHGLVFLPVVL. At 1264–1333 the chain is on the cytoplasmic side; the sequence is SYLGPDVNQA…SSLPKSDQKF (70 aa).

The protein belongs to the patched family. Interacts with RAB11A, MYO5B and RAB11FIP2. Interaction with RAB11A, MYO5B and RAB11FIP2 is required for proper transport to the plasma membrane upon cholesterol depletion. Interacts with NPC2. Interacts with LIMA1. Highly glycosylated. As to expression, expressed in small intestine, stomach and muscle, along with detectable expression in lung, heart, gall bladder, brain, testis, skin and liver. Expression in liver is extremely low.

It is found in the apical cell membrane. The protein resides in the cell membrane. It carries out the reaction cholesterol(in) = cholesterol(out). The catalysed reaction is sitosterol(out) = sitosterol(in). Plays a major role in cholesterol homeostasis. Critical for the uptake of cholesterol across the plasma membrane of the intestinal enterocyte. Involved in plant sterol absorption, it transports sitosterol, although at lower rates than cholesterol. May have a function in the transport of multiple lipids and their homeostasis, thereby influencing lipid metabolism regulation. May be involved in caveolin trafficking from the plasma membrane. Acts as a negative regulator of NPC2 and down-regulates its expression and secretion by inhibiting its maturation and accelerating its degradation. In Mus musculus (Mouse), this protein is NPC1-like intracellular cholesterol transporter 1.